Reading from the N-terminus, the 467-residue chain is E3 ubiquitin-protein ligase IE61 (467 aa).

The RING-type zinc finger occupies 19–58; sequence CTICMSTVSDLGKTMPCLHDFCFVCIRAWTSTSVQCPLCR. Disordered regions lie at residues 101 to 171, 205 to 238, 344 to 364, and 413 to 467; these read GDVI…GVTK, QQPR…FRAT, IVRP…RDTR, and DSAC…MKKS. A compositionally biased stretch (polar residues) spans 116–143; that stretch reads ESIQQPTSRSSREPIQSPNPGPLQSSAR. Over residues 149-161 the composition is skewed to low complexity; it reads SPSDSQQDSIQPP. Over residues 162–171 the composition is skewed to polar residues; the sequence is TRDSSPGVTK. Positions 228–238 are enriched in basic and acidic residues; sequence RTMDRLPFRAT. Low complexity-rich tracts occupy residues 429–443 and 450–459; these read GESN…TSGS and KSSAGKAGKG.

As to quaternary structure, interacts with host BTRC; this interaction seems to inactivate SCF-mediated protein degradation in general. In terms of processing, auto-ubiquitinated.

The catalysed reaction is S-ubiquitinyl-[E2 ubiquitin-conjugating enzyme]-L-cysteine + [acceptor protein]-L-lysine = [E2 ubiquitin-conjugating enzyme]-L-cysteine + N(6)-ubiquitinyl-[acceptor protein]-L-lysine.. Its function is as follows. RING-finger E3 ubiquitin ligase that degrades host SP100, one of the major components of ND10 nuclear bodies, thereby disrupting the organization of these bodies. Also plays a role in the inhibition of host NF-kappa-B pathway by blocking the SCF(BTRC)-mediated addition of ubiquitin chains to host I-kappa-B-alpha/NFKBIA, thereby interfering with its degradation. In Varicella-zoster virus (strain Dumas) (HHV-3), this protein is E3 ubiquitin-protein ligase IE61 (61).